The sequence spans 333 residues: Complement C1q and tumor necrosis factor-related protein 9B (333 aa).

Positions 1-19 (MRIWWLLLAIEICTGNINS) are cleaved as a signal peptide. Collagen-like domains follow at residues 24-82 (RQGH…DGKV), 95-154 (GSPG…PGPM), and 155-191 (GPIGKPGPKGEAGPTGPQGEPGVRGIRGWKGDRGEKG). Positions 24-189 (RQGHPGIPGN…IRGWKGDRGE (166 aa)) are disordered. Over residues 26–40 (GHPGIPGNPGHNGLP) the composition is skewed to low complexity. Basic and acidic residues-rich tracts occupy residues 42–55 (RDGRDGAKGDKGDA) and 69–88 (TSGEKGERGADGKVEAKGIK). One can recognise a C1q domain in the interval 197–333 (LVLPKSAFTV…FTGFLLFSSQ (137 aa)).

Interacts with CTRP9A and ADIPOQ. Forms heterotrimers and heterooligomeric complexes with CTRP9A. As to expression, expressed at low levels. Not expressed in adipose tissues.

It localises to the secreted. Probable adipokine. Activates AMPK, AKT, and p44/42 MAPK signaling pathways. The chain is Complement C1q and tumor necrosis factor-related protein 9B (C1QTNF9B) from Homo sapiens (Human).